The chain runs to 255 residues: Type III pantothenate kinase (255 aa).

ATP is bound at residue 6–13 (DIGNTNIK). Residue 107–110 (GADR) coordinates substrate. The active-site Proton acceptor is the Asp109. Residue Thr132 participates in ATP binding. A substrate-binding site is contributed by Thr184.

Belongs to the type III pantothenate kinase family. Homodimer. The cofactor is NH4(+). K(+) serves as cofactor.

The protein localises to the cytoplasm. It carries out the reaction (R)-pantothenate + ATP = (R)-4'-phosphopantothenate + ADP + H(+). It functions in the pathway cofactor biosynthesis; coenzyme A biosynthesis; CoA from (R)-pantothenate: step 1/5. Catalyzes the phosphorylation of pantothenate (Pan), the first step in CoA biosynthesis. The polypeptide is Type III pantothenate kinase (Roseiflexus sp. (strain RS-1)).